Consider the following 217-residue polypeptide: Proteasome subunit beta type-6-A like protein (217 aa).

The propeptide at 1–16 (MERHLMDSQIKGVSTG) is removed in mature form. Catalysis depends on T17, which acts as the Nucleophile.

The protein belongs to the peptidase T1B family. As to quaternary structure, the 26S proteasome consists of a 20S proteasome core and two 19S regulatory subunits. The 20S proteasome core is composed of 28 subunits that are arranged in four stacked rings, resulting in a barrel-shaped structure. The two end rings are each formed by seven alpha subunits, and the two central rings are each formed by seven beta subunits. The catalytic chamber with the active sites is on the inside of the barrel.

The protein localises to the cytoplasm. It localises to the nucleus. The catalysed reaction is Cleavage of peptide bonds with very broad specificity.. The proteasome is a multicatalytic proteinase complex which is characterized by its ability to cleave peptides with Arg, Phe, Tyr, Leu, and Glu adjacent to the leaving group at neutral or slightly basic pH. The proteasome has an ATP-dependent proteolytic activity. This subunit is involved in antigen processing to generate class I binding peptides. This is Proteasome subunit beta type-6-A like protein (psmb6l-a) from Salmo salar (Atlantic salmon).